A 337-amino-acid polypeptide reads, in one-letter code: Fructose-1,6-bisphosphatase class 1 (337 aa).

4 residues coordinate Mg(2+): glutamate 92, aspartate 114, leucine 116, and aspartate 117. Substrate is bound by residues aspartate 117–serine 120, asparagine 209, and lysine 275. Glutamate 281 lines the Mg(2+) pocket.

It belongs to the FBPase class 1 family. In terms of assembly, homotetramer. The cofactor is Mg(2+).

It localises to the cytoplasm. It catalyses the reaction beta-D-fructose 1,6-bisphosphate + H2O = beta-D-fructose 6-phosphate + phosphate. The protein operates within carbohydrate biosynthesis; gluconeogenesis. In Thiobacillus denitrificans (strain ATCC 25259 / T1), this protein is Fructose-1,6-bisphosphatase class 1.